The sequence spans 420 residues: Glucose-1-phosphate adenylyltransferase (420 aa).

Alpha-D-glucose 1-phosphate is bound by residues Tyr107, Gly172, 187 to 188, and Ser205; that span reads EK.

This sequence belongs to the bacterial/plant glucose-1-phosphate adenylyltransferase family. Homotetramer.

The catalysed reaction is alpha-D-glucose 1-phosphate + ATP + H(+) = ADP-alpha-D-glucose + diphosphate. It participates in glycan biosynthesis; glycogen biosynthesis. In terms of biological role, involved in the biosynthesis of ADP-glucose, a building block required for the elongation reactions to produce glycogen. Catalyzes the reaction between ATP and alpha-D-glucose 1-phosphate (G1P) to produce pyrophosphate and ADP-Glc. The chain is Glucose-1-phosphate adenylyltransferase from Bradyrhizobium diazoefficiens (strain JCM 10833 / BCRC 13528 / IAM 13628 / NBRC 14792 / USDA 110).